The primary structure comprises 176 residues: RNA pyrophosphohydrolase (176 aa).

Residues P8–K159 enclose the Nudix hydrolase domain. Residues G47–S68 carry the Nudix box motif.

The protein belongs to the Nudix hydrolase family. RppH subfamily. It depends on a divalent metal cation as a cofactor.

Its function is as follows. Accelerates the degradation of transcripts by removing pyrophosphate from the 5'-end of triphosphorylated RNA, leading to a more labile monophosphorylated state that can stimulate subsequent ribonuclease cleavage. The chain is RNA pyrophosphohydrolase from Rhodopseudomonas palustris (strain BisA53).